The sequence spans 308 residues: Oxygen-dependent coproporphyrinogen-III oxidase (308 aa).

Position 100 (Ser100) interacts with substrate. Residues His104 and His114 each contribute to the a divalent metal cation site. His114 (proton donor) is an active-site residue. 116-118 (NFR) is a substrate binding site. 2 residues coordinate a divalent metal cation: His153 and His183. Residues 248 to 283 (YVEFNLVFDRGTIFGLQSGGRTESILSSMPPMATWK) are important for dimerization. 266-268 (GGR) contacts substrate.

It belongs to the aerobic coproporphyrinogen-III oxidase family. As to quaternary structure, homodimer. The cofactor is a divalent metal cation.

The protein resides in the cytoplasm. The catalysed reaction is coproporphyrinogen III + O2 + 2 H(+) = protoporphyrinogen IX + 2 CO2 + 2 H2O. It functions in the pathway porphyrin-containing compound metabolism; protoporphyrin-IX biosynthesis; protoporphyrinogen-IX from coproporphyrinogen-III (O2 route): step 1/1. Its function is as follows. Involved in the heme biosynthesis. Catalyzes the aerobic oxidative decarboxylation of propionate groups of rings A and B of coproporphyrinogen-III to yield the vinyl groups in protoporphyrinogen-IX. The polypeptide is Oxygen-dependent coproporphyrinogen-III oxidase (Francisella tularensis subsp. holarctica (strain LVS)).